Here is a 110-residue protein sequence, read N- to C-terminus: Large ribosomal subunit protein uL22 (110 aa).

Belongs to the universal ribosomal protein uL22 family. As to quaternary structure, part of the 50S ribosomal subunit.

This protein binds specifically to 23S rRNA; its binding is stimulated by other ribosomal proteins, e.g. L4, L17, and L20. It is important during the early stages of 50S assembly. It makes multiple contacts with different domains of the 23S rRNA in the assembled 50S subunit and ribosome. In terms of biological role, the globular domain of the protein is located near the polypeptide exit tunnel on the outside of the subunit, while an extended beta-hairpin is found that lines the wall of the exit tunnel in the center of the 70S ribosome. This chain is Large ribosomal subunit protein uL22, found in Oleidesulfovibrio alaskensis (strain ATCC BAA-1058 / DSM 17464 / G20) (Desulfovibrio alaskensis).